Consider the following 123-residue polypeptide: MYADDFDGEIEIDEVDSLVEFLSRRPAFDANNFVLTFEESGFPQLNIFAKNDIAVVYYMDIGENFVSKGNSASGGTEKFYENKLGGEVDLSKDCVVSKEQMIEAAKQFFATKQRPEQLTWSEL.

The toxic domain forms a 1:1 complex with the DddI immunity protein. This protein blocks the active site of the toxin.

In terms of biological role, immunity protein component of a toxin-immunity protein module, which functions as a cellular contact-dependent growth inhibition (CDI) system. CDI modules allow bacteria to communicate with and inhibit the growth of closely related neighboring bacteria in a contact-dependent fashion. Bacteria that have this module inhibit or kill bacteria without it, giving them a growth advantage. Specifically inhibits the toxic activity of cognate toxin DddA (C-terminal 163 residue fragment) upon expression in E.coli. The polypeptide is Double-stranded DNA deaminase immunity protein (Burkholderia cenocepacia (strain H111)).